Consider the following 916-residue polypeptide: Bifunctional aspartokinase/homoserine dehydrogenase 2, chloroplastic (916 aa).

Residues 1 to 87 (MATLKPSFTV…VDQVQIPKGE (87 aa)) constitute a chloroplast transit peptide. The segment at 88-336 (MWSVHKFGGT…VNEAVILQTL (249 aa)) is aspartokinase. The interface stretch occupies residues 337-562 (SYQEAWEMSY…LSRTTLAMGI (226 aa)). ACT domains lie at 412–487 (VEGT…VIPN) and 493–570 (AVGQ…LIGA). The segment at 563–916 (VGPGLIGATL…RLASYLGAPS (354 aa)) is homoserine dehydrogenase. Ile-568 contributes to the NAD(+) binding site. Residues Ile-568, Lys-600, Thr-649, and Lys-673 each coordinate NADP(+). An NADPH-binding site is contributed by Ile-568. NAD(+) is bound at residue Thr-649. The NADPH site is built by Thr-649 and Lys-673. Residues Glu-700, Val-703, Ala-705, and Leu-707 each coordinate Na(+). Residues Gly-758 and Glu-761 each coordinate NADP(+). Glu-761 and Asp-772 together coordinate L-homoserine. The active-site Proton donor is the Lys-776. Gly-893 is an NAD(+) binding site. Gly-893 contributes to the NADP(+) binding site. Gly-893 is an NADPH binding site.

This sequence in the N-terminal section; belongs to the aspartokinase family. The protein in the C-terminal section; belongs to the homoserine dehydrogenase family. As to quaternary structure, homo- or heterodimer. A metal cation is required as a cofactor.

Its subcellular location is the plastid. It localises to the chloroplast. The catalysed reaction is L-homoserine + NADP(+) = L-aspartate 4-semialdehyde + NADPH + H(+). It catalyses the reaction L-homoserine + NAD(+) = L-aspartate 4-semialdehyde + NADH + H(+). The enzyme catalyses L-aspartate + ATP = 4-phospho-L-aspartate + ADP. The protein operates within amino-acid biosynthesis; L-lysine biosynthesis via DAP pathway; (S)-tetrahydrodipicolinate from L-aspartate: step 1/4. It participates in amino-acid biosynthesis; L-methionine biosynthesis via de novo pathway; L-homoserine from L-aspartate: step 1/3. It functions in the pathway amino-acid biosynthesis; L-methionine biosynthesis via de novo pathway; L-homoserine from L-aspartate: step 3/3. Its pathway is amino-acid biosynthesis; L-threonine biosynthesis; L-threonine from L-aspartate: step 1/5. The protein operates within amino-acid biosynthesis; L-threonine biosynthesis; L-threonine from L-aspartate: step 3/5. Its activity is regulated as follows. Threonine interaction with Gln-443 leads to inhibition of aspartate kinase activity and facilitates the binding of a second threonine on Gln-524, leading to a partial inhibition of homoserine dehydrogenase activity (25% of activity remaining at saturation with threonine). Homoserine dehydrogenase activity is also partially inhibited by cysteine (15% of activity remaining at saturation with cysteine). No synergy between threonine and cysteine for the inhibition. 13-fold activation of aspartate kinase activity by cysteine, isoleucine, valine, serine and alanine at 2.5 mM and 4-fold activation by leucine at 2.5 mM, but no activation of homoserine dehydrogenase activity. Its function is as follows. Bifunctional aspartate kinase and homoserine dehydrogenase that catalyzes the first and the third steps toward the synthesis of lysine, methionine and threonine from aspartate. The polypeptide is Bifunctional aspartokinase/homoserine dehydrogenase 2, chloroplastic (AKHSDH2) (Arabidopsis thaliana (Mouse-ear cress)).